Here is a 120-residue protein sequence, read N- to C-terminus: MHAFSKIRLTFNQDSPQSHEDDAAGIAVQDAKPTLQAPPMYKVVLFNDDYTPMDFVVEVLEVFFNLNRELATKVMLAVHTEGRAVCGLFTRDIAETKAMQVNQYARESQHPLLCEIEKDG.

The protein belongs to the ClpS family. In terms of assembly, binds to the N-terminal domain of the chaperone ClpA.

Involved in the modulation of the specificity of the ClpAP-mediated ATP-dependent protein degradation. The chain is ATP-dependent Clp protease adapter protein ClpS from Pseudomonas savastanoi pv. phaseolicola (strain 1448A / Race 6) (Pseudomonas syringae pv. phaseolicola (strain 1448A / Race 6)).